The following is a 323-amino-acid chain: tRNA-dihydrouridine synthase B (323 aa).

FMN contacts are provided by residues 16-18 (PMA) and Q70. C100 functions as the Proton donor in the catalytic mechanism. Residues K139, 200-202 (NGD), and 224-225 (GR) contribute to the FMN site.

Belongs to the Dus family. DusB subfamily. FMN is required as a cofactor.

It catalyses the reaction a 5,6-dihydrouridine in tRNA + NAD(+) = a uridine in tRNA + NADH + H(+). The enzyme catalyses a 5,6-dihydrouridine in tRNA + NADP(+) = a uridine in tRNA + NADPH + H(+). Catalyzes the synthesis of 5,6-dihydrouridine (D), a modified base found in the D-loop of most tRNAs, via the reduction of the C5-C6 double bond in target uridines. This Proteus vulgaris protein is tRNA-dihydrouridine synthase B.